A 487-amino-acid polypeptide reads, in one-letter code: MAGKRELLMLENFIGGKFLPCNSYIDSYDPSTGEVYCKVPNSGKEEIEAAVEAAREAFPAWSSRSPQERSLVLNRLADVLEQSLEELAQAESKDQGKTLTLARTMDIPRSVLNFRFFASSNLHHVSECTQMSHLGCMHYTVRTPVGIAGLISPWNLPLYLLTWKIAPAIAAGNTVIAKPSEMTSVTAWMFCKLLDKAGVPPGVINIVFGTGPRVGEALVSHPEVPLISFTGSQPTAERITQLSAPHCKKLSLELGGKNPAIIFEDANLEECIPATVRSSFANQGEICLCTSRIFVQRSIYSEFLKRFVEATRKWKVGVPSDPSANMGALISKAHLEKVRSYVLKAQTEGARILCGEGVDQLSLPLRNQAGYFMLPTVITDIKDESRCMTEEIFGPVTCVVPFDSEEEVITRANSVRYGLAATVWSKDVGRIHRVAKKLQSGLVWTNCWLIRELNLPFGGMKSSGIGREGAKDSYDFFTEIKTITIKY.

231–236 (GSQPTA) contacts NAD(+). The active-site Proton acceptor is the Glu253. The Nucleophile role is filled by Cys287. Ser362 bears the Phosphoserine mark.

It belongs to the aldehyde dehydrogenase family. As to expression, detected in hepatocytes and in proximal and distal convoluted tubules in kidney cortex (at protein level). Highly expressed in adult liver and in kidney cortex. First detected in embryonic liver after 15 days of development.

It is found in the cytoplasm. The catalysed reaction is 2-aminomuconate 6-semialdehyde + NAD(+) + H2O = (2Z,4E)-2-aminomuconate + NADH + 2 H(+). It participates in amino-acid degradation; L-kynurenine degradation. Its function is as follows. Catalyzes the NAD-dependent oxidation of 2-aminomuconic semialdehyde of the kynurenine metabolic pathway in L-tryptophan degradation. The chain is 2-aminomuconic semialdehyde dehydrogenase (Aldh8a1) from Mus musculus (Mouse).